Consider the following 143-residue polypeptide: Large ribosomal subunit protein uL11 (143 aa).

This sequence belongs to the universal ribosomal protein uL11 family. In terms of assembly, part of the ribosomal stalk of the 50S ribosomal subunit. Interacts with L10 and the large rRNA to form the base of the stalk. L10 forms an elongated spine to which L12 dimers bind in a sequential fashion forming a multimeric L10(L12)X complex. Post-translationally, one or more lysine residues are methylated.

In terms of biological role, forms part of the ribosomal stalk which helps the ribosome interact with GTP-bound translation factors. The protein is Large ribosomal subunit protein uL11 of Treponema denticola (strain ATCC 35405 / DSM 14222 / CIP 103919 / JCM 8153 / KCTC 15104).